The primary structure comprises 154 residues: Methylglyoxal synthase (154 aa).

The MGS-like domain maps to 6 to 154; sequence SPLPANKAIA…AYMARRAQGN (149 aa). Substrate is bound by residues histidine 19, lysine 23, 45–48, and 65–66; these read TGTT and SG. Aspartate 71 serves as the catalytic Proton donor/acceptor. Histidine 98 lines the substrate pocket.

The protein belongs to the methylglyoxal synthase family.

It catalyses the reaction dihydroxyacetone phosphate = methylglyoxal + phosphate. Its function is as follows. Catalyzes the formation of methylglyoxal from dihydroxyacetone phosphate. The protein is Methylglyoxal synthase of Cellvibrio japonicus (strain Ueda107) (Pseudomonas fluorescens subsp. cellulosa).